The sequence spans 509 residues: Cytochrome P450 6A1 (509 aa).

Residue Cys449 participates in heme binding.

The protein belongs to the cytochrome P450 family. The cofactor is heme.

It is found in the endoplasmic reticulum membrane. The protein resides in the microsome membrane. It carries out the reaction an organic molecule + reduced [NADPH--hemoprotein reductase] + O2 = an alcohol + oxidized [NADPH--hemoprotein reductase] + H2O + H(+). Functionally, involved in the metabolism of insect hormones and in the breakdown of synthetic insecticides. The polypeptide is Cytochrome P450 6A1 (CYP6A1) (Musca domestica (House fly)).